Here is a 366-residue protein sequence, read N- to C-terminus: DNA-directed RNA polymerase II subunit GRINL1A (366 aa).

Residues 1 to 23 are disordered; it reads MFSLPRGFEPPAPEDLGRQSSAE. A coiled-coil region spans residues 15–39; sequence DLGRQSSAELRERLRRQERLLRNEK. An important for transcription repressor activity region spans residues 29 to 68; that stretch reads RRQERLLRNEKFICKLPDKGKKISDTVAKLKAAISEREEV. 4 disordered regions span residues 88-140, 158-182, 201-225, and 237-280; these read ATTR…HRGN, IRARAPSSEVKEHLPQHSVSSQEEE, ADQSEPSEENTSTENFPELQSETPK, and ARNP…RRAR. A compositionally biased stretch (basic and acidic residues) spans 90-100; sequence TRADTDVDKAQ. Over residues 101–127 the composition is skewed to low complexity; sequence SSDLMLDTSSLDPDCSSIDIKSSKSTS. The tract at residues 225 to 296 is interaction with Pol II; the sequence is KKPHYMKVLE…TAARLLPLHH (72 aa). Residues 251-272 show a composition bias toward polar residues; that stretch reads VLPTQQSDSPSHCQRGQSPASS. A Phosphoserine modification is found at S268. Residues 297 to 312 form an important for transcription repressor activity region; it reads LPAQLLSIEESLALQR. A coiled-coil region spans residues 299–333; the sequence is AQLLSIEESLALQREQKQNYEEMQAKLAAQKLAER. Residues 313 to 338 are interaction with Pol II; that stretch reads EQKQNYEEMQAKLAAQKLAERLNIKM. Positions 338–366 are disordered; it reads MQSYNPEGESSGRYREVRDEADAQSSDEC. Over residues 347 to 358 the composition is skewed to basic and acidic residues; the sequence is SSGRYREVRDEA.

Belongs to the GRINL1 family. As to quaternary structure, component of the Pol II(G) complex, which contains the RNA polymerase II (Pol II) core complex subunits and POLR2M isoform 1. Pol II(G) appears to be an abundant form of Pol II. Post-translationally, dephosphorylated at Ser-268 by the PNUTS-PP1 complex, promoting RNA polymerase II transcription pause-release.

Its subcellular location is the nucleus. Appears to be a stable component of the Pol II(G) complex form of RNA polymerase II (Pol II). Pol II synthesizes mRNA precursors and many functional non-coding RNAs and is the central component of the basal RNA polymerase II transcription machinery. May play a role in the Mediator complex-dependent regulation of transcription activation. Acts as a negative regulator of transcriptional activation; this repression is relieved by the Mediator complex, which restores Pol II(G) activator-dependent transcription to a level equivalent to that of Pol II. In Mus musculus (Mouse), this protein is DNA-directed RNA polymerase II subunit GRINL1A (Polr2m).